Reading from the N-terminus, the 397-residue chain is Vacuolar protein sorting-associated protein 37A (397 aa).

The disordered stretch occupies residues 1–22; sequence MSWLFPLTKSASSSAAGSPGGL. At S18 the chain carries Phosphoserine. The region spanning 308–397 is the VPS37 C-terminal domain; sequence KSTFEKKMQR…AMHSQFHAPL (90 aa).

The protein belongs to the VPS37 family. Component of the ESCRT-I complex (endosomal sorting complex required for transport I) which consists of TSG101, VPS28, a VPS37 protein (VPS37A to -D) and MVB12A or MVB12B in a 1:1:1:1 stoichiometry. Interacts with TSG101, VPS28 and HGS. Component of an ESCRT-I complex (endosomal sorting complex required for transport I) which consists of TSG101, VPS28, VPS37A and UBAP1 in a 1:1:1:1 stoichiometry. As to expression, widely expressed. Examined tissues include heart, brain, placenta, liver, skeletal muscle, kidney and pancreas. More abundant in liver. Strongly decreased or undetected in hepatomas.

It localises to the late endosome membrane. The protein localises to the nucleus. Functionally, component of the ESCRT-I complex, a regulator of vesicular trafficking process. Required for the sorting of endocytic ubiquitinated cargos into multivesicular bodies. May be involved in cell growth and differentiation. The sequence is that of Vacuolar protein sorting-associated protein 37A (VPS37A) from Homo sapiens (Human).